The chain runs to 363 residues: Uroporphyrinogen decarboxylase (363 aa).

Residues 27–31 (RQAGR), aspartate 77, tyrosine 157, threonine 212, and histidine 333 contribute to the substrate site.

Belongs to the uroporphyrinogen decarboxylase family. As to quaternary structure, homodimer.

It localises to the cytoplasm. The catalysed reaction is uroporphyrinogen III + 4 H(+) = coproporphyrinogen III + 4 CO2. The protein operates within porphyrin-containing compound metabolism; protoporphyrin-IX biosynthesis; coproporphyrinogen-III from 5-aminolevulinate: step 4/4. Functionally, catalyzes the decarboxylation of four acetate groups of uroporphyrinogen-III to yield coproporphyrinogen-III. The sequence is that of Uroporphyrinogen decarboxylase from Cupriavidus necator (strain ATCC 17699 / DSM 428 / KCTC 22496 / NCIMB 10442 / H16 / Stanier 337) (Ralstonia eutropha).